A 149-amino-acid polypeptide reads, in one-letter code: Large ribosomal subunit protein uL11 (149 aa).

Belongs to the universal ribosomal protein uL11 family. Part of the ribosomal stalk of the 50S ribosomal subunit. Interacts with L10 and the large rRNA to form the base of the stalk. L10 forms an elongated spine to which L12 dimers bind in a sequential fashion forming a multimeric L10(L12)X complex. In terms of processing, one or more lysine residues are methylated.

In terms of biological role, forms part of the ribosomal stalk which helps the ribosome interact with GTP-bound translation factors. This Methylorubrum extorquens (strain CM4 / NCIMB 13688) (Methylobacterium extorquens) protein is Large ribosomal subunit protein uL11.